Consider the following 391-residue polypeptide: Phosphoglycerate kinase (391 aa).

Residues 21-23, R36, 59-62, R113, and R146 each bind substrate; these read DLN and HLGR. Residues K197, E319, and 345-348 each bind ATP; that span reads GGDT.

The protein belongs to the phosphoglycerate kinase family. As to quaternary structure, monomer.

It localises to the cytoplasm. It carries out the reaction (2R)-3-phosphoglycerate + ATP = (2R)-3-phospho-glyceroyl phosphate + ADP. It participates in carbohydrate degradation; glycolysis; pyruvate from D-glyceraldehyde 3-phosphate: step 2/5. The polypeptide is Phosphoglycerate kinase (Shewanella woodyi (strain ATCC 51908 / MS32)).